A 754-amino-acid chain; its full sequence is Catalase-peroxidase (754 aa).

The segment at 1–29 (MGTQPARKLRNRVFPHPHNHRKEKPMAND) is disordered. The segment covering 7-23 (RKLRNRVFPHPHNHRKE) has biased composition (basic residues). Catalysis depends on tryptophan 106, which acts as the Tryptophan radical intermediate. The segment at residues 122-249 (WHAAGTYRIA…LAAVQMGLIY (128 aa)) is a cross-link (tryptophyl-tyrosyl-methioninium (Trp-Tyr) (with M-275)). The active-site Proton acceptor is the histidine 123. The segment at residues 249 to 275 (YVNPEGVDGHPDPLCTAQDVRTTFARM) is a cross-link (tryptophyl-tyrosyl-methioninium (Tyr-Met) (with W-122)). A heme b-binding site is contributed by histidine 290.

It belongs to the peroxidase family. Peroxidase/catalase subfamily. In terms of assembly, homodimer. The cofactor is heme b. Post-translationally, formation of the three residue Trp-Tyr-Met cross-link is important for the catalase, but not the peroxidase activity of the enzyme.

The enzyme catalyses H2O2 + AH2 = A + 2 H2O. The catalysed reaction is 2 H2O2 = O2 + 2 H2O. In terms of biological role, bifunctional enzyme with both catalase and broad-spectrum peroxidase activity. Also displays NADH oxidase, isoniazid hydrazine lyase and isonicotinoyl-NAD synthase activities. The sequence is that of Catalase-peroxidase from Synechocystis sp. (strain ATCC 27184 / PCC 6803 / Kazusa).